The primary structure comprises 154 residues: Ribonuclease H (154 aa).

The RNase H type-1 domain maps to 5 to 147 (GKSRVAIYTD…ADMLARGEVE (143 aa)). Residues D14, E53, D75, and D139 each coordinate Mg(2+).

Belongs to the RNase H family. In terms of assembly, monomer. Mg(2+) serves as cofactor.

The protein localises to the cytoplasm. It catalyses the reaction Endonucleolytic cleavage to 5'-phosphomonoester.. In terms of biological role, endonuclease that specifically degrades the RNA of RNA-DNA hybrids. This is Ribonuclease H from Anaplasma marginale (strain St. Maries).